Here is a 92-residue protein sequence, read N- to C-terminus: MGIFDWKHWIVILVVVVLVFGTKKLKNLGTDVGESIKGFRKAMNDDEKPADPTVTPAQPVPPVQPQATAQANPPHTIDVQAQKVEEPIRKDV.

The chain crosses the membrane as a helical span at residues 1–21 (MGIFDWKHWIVILVVVVLVFG). The interval 43–92 (MNDDEKPADPTVTPAQPVPPVQPQATAQANPPHTIDVQAQKVEEPIRKDV) is disordered. Low complexity predominate over residues 65-74 (PQATAQANPP). A compositionally biased stretch (basic and acidic residues) spans 83-92 (KVEEPIRKDV).

The protein belongs to the TatA/E family. In terms of assembly, the Tat system comprises two distinct complexes: a TatABC complex, containing multiple copies of TatA, TatB and TatC subunits, and a separate TatA complex, containing only TatA subunits. Substrates initially bind to the TatABC complex, which probably triggers association of the separate TatA complex to form the active translocon.

It localises to the cell inner membrane. Part of the twin-arginine translocation (Tat) system that transports large folded proteins containing a characteristic twin-arginine motif in their signal peptide across membranes. TatA could form the protein-conducting channel of the Tat system. The polypeptide is Sec-independent protein translocase protein TatA (Pseudomonas fluorescens (strain Pf0-1)).